We begin with the raw amino-acid sequence, 379 residues long: Queuine tRNA-ribosyltransferase (379 aa).

The Proton acceptor role is filled by aspartate 94. Residues 94–98, aspartate 148, glutamine 191, and glycine 218 each bind substrate; that span reads DSGGF. An RNA binding region spans residues 249–255; sequence GVGSPDA. Aspartate 268 (nucleophile) is an active-site residue. Positions 273 to 277 are RNA binding; important for wobble base 34 recognition; sequence TRIAR. Cysteine 306, cysteine 308, cysteine 311, and histidine 337 together coordinate Zn(2+).

The protein belongs to the queuine tRNA-ribosyltransferase family. Homodimer. Within each dimer, one monomer is responsible for RNA recognition and catalysis, while the other monomer binds to the replacement base PreQ1. The cofactor is Zn(2+).

It carries out the reaction 7-aminomethyl-7-carbaguanine + guanosine(34) in tRNA = 7-aminomethyl-7-carbaguanosine(34) in tRNA + guanine. It functions in the pathway tRNA modification; tRNA-queuosine biosynthesis. In terms of biological role, catalyzes the base-exchange of a guanine (G) residue with the queuine precursor 7-aminomethyl-7-deazaguanine (PreQ1) at position 34 (anticodon wobble position) in tRNAs with GU(N) anticodons (tRNA-Asp, -Asn, -His and -Tyr). Catalysis occurs through a double-displacement mechanism. The nucleophile active site attacks the C1' of nucleotide 34 to detach the guanine base from the RNA, forming a covalent enzyme-RNA intermediate. The proton acceptor active site deprotonates the incoming PreQ1, allowing a nucleophilic attack on the C1' of the ribose to form the product. After dissociation, two additional enzymatic reactions on the tRNA convert PreQ1 to queuine (Q), resulting in the hypermodified nucleoside queuosine (7-(((4,5-cis-dihydroxy-2-cyclopenten-1-yl)amino)methyl)-7-deazaguanosine). The protein is Queuine tRNA-ribosyltransferase of Staphylococcus aureus (strain Mu3 / ATCC 700698).